The primary structure comprises 464 residues: Probable mannosyltransferase KTR4 (464 aa).

At 1–11 the chain is on the cytoplasmic side; it reads MRFLSKRILKP. The chain crosses the membrane as a helical; Signal-anchor for type II membrane protein span at residues 12-32; that stretch reads VLSVIILISIAVTVVLYFLTA. The interval 33-130 is stem region; it reads NENYLQAVKD…NLVRSGDPLA (98 aa). The Lumenal segment spans residues 33–464; it reads NENYLQAVKD…SMSEEELEMY (432 aa). Positions 131–464 are catalytic; the sequence is GKAKGTILSL…SMSEEELEMY (334 aa). E352 acts as the Nucleophile in catalysis.

Belongs to the glycosyltransferase 15 family.

Its subcellular location is the membrane. In terms of biological role, possible glycosyltransferase that transfers an alpha-D-mannosyl residue from GDP-mannose into lipid-linked oligosaccharide, forming an alpha-(1-&gt;2)-D-mannosyl-D-mannose linkage. This Saccharomyces cerevisiae (strain ATCC 204508 / S288c) (Baker's yeast) protein is Probable mannosyltransferase KTR4 (KTR4).